The chain runs to 140 residues: Desampylase (140 aa).

In terms of domain architecture, MPN spans 13–133 (TLIIPQHYLR…WILSEKNKIS (121 aa)). Glutamate 34 serves as the catalytic Proton donor/acceptor. Zn(2+)-binding residues include histidine 88, histidine 90, and aspartate 101. The short motif at 88 to 101 (HSHIACPPIPSGKD) is the JAMM motif element.

The protein belongs to the peptidase M67B family. As to quaternary structure, exists in two major states: monomer and homodimer. Both conformational states are catalytically active. Requires Zn(2+) as cofactor. In terms of processing, the disulfide bridge probably stabilizes the PfJAMM1 homodimer at the optimal growth temperature of the hyperthermophile.

It catalyses the reaction an N(6)-[small archaeal modifier protein]-[protein]-L-lysine + H2O = a [protein]-L-lysine + a [small archaeal modifier protein].. Inhibited by EDTA in vitro. Functionally, metalloprotease that displays desampylase (DSAMP) activity, cleaving ubiquitin-like small archaeal modifier proteins (SAMP1, SAMP2 and SAMP3) from protein conjugates (isopeptide- and linear-linked). Thus, likely regulates sampylation and the pools of 'free' SAMP available for protein modification. In vitro, is also able to cleave non-physiological ubiquitin (Ub) substrates, such as 'Met1-', 'Lys48-', and 'Lys63'-linked Ub dimers (Ub2), and to remove Ub tags from diverse proteins. The chain is Desampylase from Pyrococcus furiosus (strain ATCC 43587 / DSM 3638 / JCM 8422 / Vc1).